We begin with the raw amino-acid sequence, 218 residues long: LOB domain-containing protein 29 (218 aa).

In terms of domain architecture, LOB spans 10–112; it reads SPCGACKFLR…AELEILKQQA (103 aa).

Belongs to the LOB domain-containing protein family. As to expression, expressed in roots.

Its function is as follows. Involved in lateral root formation. Regulated by the transcriptional activators ARF7 and ARF19. The protein is LOB domain-containing protein 29 (LBD29) of Arabidopsis thaliana (Mouse-ear cress).